Reading from the N-terminus, the 354-residue chain is Serum paraoxonase/arylesterase 2 (354 aa).

Asn29 carries N-linked (GlcNAc...) asparagine glycosylation. Cys42 and Cys352 are oxidised to a cystine. Ca(2+)-binding residues include Glu53 and Asp54. His114 (proton acceptor) is an active-site residue. Positions 116, 167, 168, and 223 each coordinate Ca(2+). Residue Asn254 is glycosylated (N-linked (GlcNAc...) asparagine). 2 residues coordinate Ca(2+): Asp268 and Asn269. N-linked (GlcNAc...) asparagine glycans are attached at residues Asn269 and Asn323.

Belongs to the paraoxonase family. Ca(2+) serves as cofactor. Post-translationally, glycosylated. In terms of processing, the signal sequence is not cleaved.

The protein resides in the membrane. The catalysed reaction is a phenyl acetate + H2O = a phenol + acetate + H(+). It carries out the reaction An aryl dialkyl phosphate + H2O = dialkyl phosphate + an aryl alcohol.. The absence of paraoxonase activity in turkey and chicken blood and in turkey liver indicates that PON2, if expressed, does not hydrolyze paraoxon. The sequence is that of Serum paraoxonase/arylesterase 2 (PON2) from Gallus gallus (Chicken).